A 520-amino-acid polypeptide reads, in one-letter code: DDB1- and CUL4-associated factor 17 (520 aa).

2 consecutive transmembrane segments (helical) span residues 186–206 and 222–242; these read VLLY…ILEI and GILI…QTIA.

As to quaternary structure, interacts with DDB1, CUL4A and CUL4B. In terms of tissue distribution, ubiquitously expressed.

Its subcellular location is the membrane. The protein localises to the nucleus. The protein resides in the nucleolus. The protein operates within protein modification; protein ubiquitination. May function as a substrate receptor for CUL4-DDB1 E3 ubiquitin-protein ligase complex. The protein is DDB1- and CUL4-associated factor 17 (DCAF17) of Homo sapiens (Human).